Consider the following 495-residue polypeptide: Probable cytochrome P450 513C1 (495 aa).

Residues 1–21 form a helical membrane-spanning segment; that stretch reads MNYLVLILVSLVSIYFLFIKN. Cysteine 441 is a heme binding site.

It belongs to the cytochrome P450 family. The cofactor is heme.

It is found in the membrane. The polypeptide is Probable cytochrome P450 513C1 (cyp513C1) (Dictyostelium discoideum (Social amoeba)).